The sequence spans 629 residues: Dehydrogenase pyvF (629 aa).

A signal peptide spans 1–22 (MAGSPFTTALLSAWTLSTVAVG). Residues 61–62 (AS) and 82–83 (EA) contribute to the FAD site. A glycan (N-linked (GlcNAc...) asparagine) is linked at Asn92. Residue 144 to 147 (NLMA) participates in FAD binding. N-linked (GlcNAc...) asparagine glycosylation is found at Asn172, Asn182, Asn256, Asn284, Asn312, and Asn421. The Proton acceptor role is filled by His552. FAD is bound by residues Ala586 and 597 to 598 (PL).

It belongs to the GMC oxidoreductase family. Homodimer. FAD serves as cofactor.

It functions in the pathway secondary metabolite biosynthesis. Functionally, dehydrogenase; part of the gene cluster that mediates the biosynthesis of pyranoviolin A, a pyranonigrin analog with a C-3 methoxy group. Initially, the PKS portion of pyvA synthesizes C-10 carbon chain from 5 molecules of malonyl-CoA, which is then condensed with the thiolation (T) domain-bound glycine activated by the adenylation (A) domain. The subsequent chain release by Dieckmann condensation (DKC) could be catalyzed by the TE domain present at the C-terminus of pyvA and/or the alpha/beta hydrolase pyvD, installing the tetramic acid moiety. The FAD-dependent monooxygenase pyvC next epoxidizes one of the olefins of the polyketide part, and the epoxide ring-opening induces the dihydro-gamma-pyrone ring formation. The cytochrome P450 monooxygeanse pyvB would be responsible for the 2 consecutive reactions, in which the dihydro-gamma-pyrone is oxidized to gamma-pyrone and C-7 is hydroxylated to yield pyranonigrin F. Finally, the O-methyltransferase pyvH methylates the C-3 hydroxy group to complete the biosynthesis. The sequence is that of Dehydrogenase pyvF from Aspergillus violaceofuscus (strain CBS 115571).